We begin with the raw amino-acid sequence, 248 residues long: 14-3-3 protein zeta (248 aa).

Belongs to the 14-3-3 family. As to quaternary structure, homodimer.

The protein resides in the cytoplasm. Functionally, adapter protein implicated in the regulation of a large spectrum of both general and specialized signaling pathways. Binds to a large number of partners, usually by recognition of a phosphoserine or phosphothreonine motif. Binding generally results in the modulation of the activity of the binding partner. The protein is 14-3-3 protein zeta (14-3-3zeta) of Aedes aegypti (Yellowfever mosquito).